The chain runs to 448 residues: Probable glycine dehydrogenase (decarboxylating) subunit 1 (448 aa).

The protein belongs to the GcvP family. N-terminal subunit subfamily. In terms of assembly, the glycine cleavage system is composed of four proteins: P, T, L and H. In this organism, the P 'protein' is a heterodimer of two subunits.

The enzyme catalyses N(6)-[(R)-lipoyl]-L-lysyl-[glycine-cleavage complex H protein] + glycine + H(+) = N(6)-[(R)-S(8)-aminomethyldihydrolipoyl]-L-lysyl-[glycine-cleavage complex H protein] + CO2. Functionally, the glycine cleavage system catalyzes the degradation of glycine. The P protein binds the alpha-amino group of glycine through its pyridoxal phosphate cofactor; CO(2) is released and the remaining methylamine moiety is then transferred to the lipoamide cofactor of the H protein. This chain is Probable glycine dehydrogenase (decarboxylating) subunit 1, found in Anoxybacillus flavithermus (strain DSM 21510 / WK1).